A 161-amino-acid polypeptide reads, in one-letter code: Ribonuclease H (161 aa).

The RNase H type-1 domain occupies 3–144 (VLKQLSIFTD…CDTLARVAAE (142 aa)). Residues Asp-12, Glu-50, Asp-72, and Asp-136 each contribute to the Mg(2+) site.

This sequence belongs to the RNase H family. Monomer. The cofactor is Mg(2+).

The protein resides in the cytoplasm. It carries out the reaction Endonucleolytic cleavage to 5'-phosphomonoester.. In terms of biological role, endonuclease that specifically degrades the RNA of RNA-DNA hybrids. This chain is Ribonuclease H, found in Shewanella woodyi (strain ATCC 51908 / MS32).